A 417-amino-acid polypeptide reads, in one-letter code: Glutamyl-tRNA reductase (417 aa).

Residues 48-51 (TCNR), serine 100, 105-107 (EDQ), and glutamine 111 contribute to the substrate site. The active-site Nucleophile is the cysteine 49. 180 to 185 (GAGETG) is an NADP(+) binding site.

This sequence belongs to the glutamyl-tRNA reductase family. In terms of assembly, homodimer.

The enzyme catalyses (S)-4-amino-5-oxopentanoate + tRNA(Glu) + NADP(+) = L-glutamyl-tRNA(Glu) + NADPH + H(+). It participates in porphyrin-containing compound metabolism; protoporphyrin-IX biosynthesis; 5-aminolevulinate from L-glutamyl-tRNA(Glu): step 1/2. In terms of biological role, catalyzes the NADPH-dependent reduction of glutamyl-tRNA(Glu) to glutamate 1-semialdehyde (GSA). This is Glutamyl-tRNA reductase from Methanothrix thermoacetophila (strain DSM 6194 / JCM 14653 / NBRC 101360 / PT) (Methanosaeta thermophila).